The sequence spans 945 residues: Bifunctional glutamine synthetase adenylyltransferase/adenylyl-removing enzyme (945 aa).

Positions 1 to 441 (MLPLSAALQT…VFNDLIGDDS (441 aa)) are adenylyl removase. Residues 450–945 (YQHYHSLWQD…VRASWAKWLG (496 aa)) form an adenylyl transferase region.

It belongs to the GlnE family. It depends on Mg(2+) as a cofactor.

It carries out the reaction [glutamine synthetase]-O(4)-(5'-adenylyl)-L-tyrosine + phosphate = [glutamine synthetase]-L-tyrosine + ADP. The catalysed reaction is [glutamine synthetase]-L-tyrosine + ATP = [glutamine synthetase]-O(4)-(5'-adenylyl)-L-tyrosine + diphosphate. In terms of biological role, involved in the regulation of glutamine synthetase GlnA, a key enzyme in the process to assimilate ammonia. When cellular nitrogen levels are high, the C-terminal adenylyl transferase (AT) inactivates GlnA by covalent transfer of an adenylyl group from ATP to specific tyrosine residue of GlnA, thus reducing its activity. Conversely, when nitrogen levels are low, the N-terminal adenylyl removase (AR) activates GlnA by removing the adenylyl group by phosphorolysis, increasing its activity. The regulatory region of GlnE binds the signal transduction protein PII (GlnB) which indicates the nitrogen status of the cell. The protein is Bifunctional glutamine synthetase adenylyltransferase/adenylyl-removing enzyme of Serratia proteamaculans (strain 568).